A 1019-amino-acid polypeptide reads, in one-letter code: MPRSSATARKSHSNRHENGSANTGKKVAKQKSNGHLNVNLNGGSASSSLSSSQVDLPSSRSSSDPVVPTTTAASTKLNGTPDSSKGDCNAPDHLNGYAKGNADMSYVQNDGVASQTGGDVAGPASRRTEKSATGSKRSPSNASVNPLQLASTILKSCPMYDTIAILIFLLQLPPMVLTLVQFLFASLTFLPPSGASAGSLTSNFDIFQGPAGTPSLGTMIAMDGFCLLIWGLFMWTWAQNFALDLAHVQVAITLGGGGFGKNGGVNTLCVGIVLIMHLVRSKGIQDFVIGHLLSSNIISPDMLSQYSHLLPTEFRRTEPQTSPSWLRSLLAVHILAQAGTAMARRSMAKNRTPNPPRTGKRIDTEASAGSQTQIDSAFESGASVSSYIGADGQIVTSAAHKDGRDRLLSAKKRRRQANQVRSRQPFWAALASTKITVMREYEHSRALSKTARSLPMTEDDLQGLSLDDGLVWITEIDSSTIKFAAGDFSSADDSSGSGACEAGCLGSEDMEPFYVCVNGALWATATICKVHDAPKGSSMVHWRGEISGLAPNCAYTCSFVRSDTDEEICVISVKTPANNDAEQVSSVSTPPHPSYRPSSPTTTLKNSIVNAEAKLNEKRSRLRKAKNDHKLIISKIRKELDNYNHRLHSGTDENRQKQRSLQLERNIRQTEEATALLEDQLDNLENVPEEELRKWSDQKAKYEHELGLLNSAKEELASARSAIAREVSSLETELSSAIQRRERLQSRRTRINEQYERIVSANAQGLNERERRAAEQFAREQDQAKLEATFNEQFATIGQSVQEYQLRAQQIWQQCDAIEQAIQQQHQQMLLDPGPLTPEGNLPGTNPFSESALPLGALTSTAPSSRSLLGLSFPPLKSSPLQTASSPVGASSSHPTSPVQQPSYLNFPTSPLVNASSHLDSDFVYRHRSFSNRSARSSLYGSDFMDSSRRQPFQLDLSELLADKRSPGSDSNTALNSGLRPVSSPFQRAGSRGSGSGSNGSGGSGSGSGSPSSVYGKTN.

2 disordered regions span residues 1-94 (MPRS…PDHL) and 109-143 (NDGV…SNAS). Over residues 30–43 (QKSNGHLNVNLNGG) the composition is skewed to polar residues. Residues 44–66 (SASSSLSSSQVDLPSSRSSSDPV) are compositionally biased toward low complexity. Composition is skewed to polar residues over residues 68 to 83 (PTTT…TPDS) and 131 to 143 (SATG…SNAS). Helical transmembrane passes span 163-183 (IAIL…VQFL), 216-236 (LGTM…FMWT), and 259-279 (FGKN…MHLV). Disordered stretches follow at residues 343 to 371 (ARRS…AGSQ), 580 to 603 (DAEQ…PTTT), 831 to 855 (LDPG…ALPL), 879 to 905 (SPLQ…PSYL), and 963 to 1019 (DKRS…GKTN). The segment covering 580–589 (DAEQVSSVST) has biased composition (polar residues). Residues 602 to 788 (TTLKNSIVNA…REQDQAKLEA (187 aa)) are a coiled coil. The segment covering 992–1008 (RGSGSGSNGSGGSGSGS) has biased composition (gly residues).

The protein belongs to the acrB family.

It is found in the membrane. Its function is as follows. Component of the regulatory network controlling carbon source utilization through ubiquitination and deubiquitination involving creA, creB, creC, creD and acrB. Involved in resistance to acriflavine, and required for normal growth on a range of sole carbon sources, including fructose, cellobiose, raffinose, and starch, and reduced utilization of amino acids, including GABA and beta-alanine, as sole carbon and nitrogen sources. The polypeptide is Probable ubiquitination network signaling protein acrB (acrB) (Aspergillus fumigatus (strain ATCC MYA-4609 / CBS 101355 / FGSC A1100 / Af293) (Neosartorya fumigata)).